The primary structure comprises 160 residues: Small ribosomal subunit protein uS17m (160 aa).

The protein belongs to the universal ribosomal protein uS17 family. In terms of assembly, component of the mitochondrial ribosome small subunit (28S) which comprises a 12S rRNA and about 30 distinct proteins.

The protein resides in the mitochondrion. This Caenorhabditis elegans protein is Small ribosomal subunit protein uS17m (mrps-17).